Consider the following 339-residue polypeptide: Glycerol-3-phosphate dehydrogenase [NAD(P)+] (339 aa).

Positions 11, 12, and 109 each coordinate NADPH. Sn-glycerol 3-phosphate-binding residues include Lys109, Gly140, and Ser142. Residue Ala144 participates in NADPH binding. The sn-glycerol 3-phosphate site is built by Lys195, Asp249, Ser259, Arg260, and Asn261. Lys195 functions as the Proton acceptor in the catalytic mechanism. Residue Arg260 coordinates NADPH. Residues Val284 and Glu286 each coordinate NADPH.

It belongs to the NAD-dependent glycerol-3-phosphate dehydrogenase family.

It is found in the cytoplasm. It catalyses the reaction sn-glycerol 3-phosphate + NAD(+) = dihydroxyacetone phosphate + NADH + H(+). It carries out the reaction sn-glycerol 3-phosphate + NADP(+) = dihydroxyacetone phosphate + NADPH + H(+). It functions in the pathway membrane lipid metabolism; glycerophospholipid metabolism. Functionally, catalyzes the reduction of the glycolytic intermediate dihydroxyacetone phosphate (DHAP) to sn-glycerol 3-phosphate (G3P), the key precursor for phospholipid synthesis. This chain is Glycerol-3-phosphate dehydrogenase [NAD(P)+], found in Lactobacillus johnsonii (strain CNCM I-12250 / La1 / NCC 533).